The chain runs to 1503 residues: Translocase of chloroplast 159, chloroplastic (1503 aa).

The span at 1–24 (MDSKSVTPEPTNPFYASSGQSGKT) shows a compositional bias: polar residues. The interval 1–210 (MDSKSVTPEP…GGKVDVDDKS (210 aa)) is disordered. A helical membrane pass occupies residues 21–37 (SGKTYASVVAAAAAAAA). S71 carries the phosphoserine modification. Basic and acidic residues-rich tracts occupy residues 85–98 (KVSDEVDGSLKEDS) and 176–210 (SESKVKDVEEEDVGTKKDDEGESELGGKVDVDDKS). Phosphoserine occurs at positions 210, 281, and 288. Disordered regions lie at residues 298 to 338 (KFTS…DVEK) and 429 to 464 (VHNKFDPIGQGEGGEVELESDKATEEGGGKLVSEGD). Positions 447-456 (ESDKATEEGG) are enriched in basic and acidic residues. 7 positions are modified to phosphoserine: S448, S461, S589, S609, S630, S632, and S665. Residues 610–633 (FGGKEVDQEPSGEGVTRVDGSESE) form a disordered region. The stretch at 781–804 (EEEKQKLEKLQSLRVKFLRLLQRL) forms a coiled coil. Positions 853 to 1087 (IFSLNILVLG…RPQEPLDHRK (235 aa)) constitute an AIG1-type G domain. A G1 region spans residues 862–869 (GKAGVGKS). GTP contacts are provided by residues 865–870 (GVGKSA) and 884–889 (DAFGLS). S869 provides a ligand contact to Mg(2+). The tract at residues 884 to 887 (DAFG) is homodimerization. Residues 889 to 893 (STTSV) are G2. Residues 909–912 (DTPG) form a G3 region. The homodimerization stretch occupies residues 947-952 (RLDTQT). Residues 981–984 (THAA) form a G4 region. GTP contacts are provided by residues H982 and 1035–1036 (EN). The interval 1035-1037 (ENH) is G5. Residues 1175 to 1203 (DYRVKLLQKKQWREELKRMKEMKKNGKKL) adopt a coiled-coil conformation. A disordered region spans residues 1203–1222 (LGESEFGYPGEEDDPENGAP).

This sequence belongs to the TRAFAC class TrmE-Era-EngA-EngB-Septin-like GTPase superfamily. AIG1/Toc34/Toc159-like paraseptin GTPase family. TOC159 subfamily. As to quaternary structure, homodimer and heterodimer with TOC33. Part of the TOC core complex that includes 1 protein for the specific recognition of transit peptides surrounded by a ring composed of four proteins forming translocation channels, and four to five GTP-binding proteins providing energy. This core complex can interact with components of the TIC complex to form a larger import complex. Chloroplastic protein precursor such as prSS (precursor of the RuBisCO small subunit) interacts with these complexes. The TOC complex contains a specific subset of polar lipids such as digalactosyldiacylglyceride (DGDG), phosphatidylcholine (PC) and phosphatidylglycerol (PG). Interacts with SP1. The cofactor is Mg(2+). In terms of processing, phosphorylated by KOC1.

It localises to the plastid. The protein resides in the chloroplast outer membrane. It is found in the cytoplasm. Its function is as follows. GTPase involved in protein precursor import into chloroplasts. Seems to recognize chloroplast-destined precursor proteins and regulate their presentation to the translocation channel through GTP hydrolysis. Required for chloroplast biogenesis. Probably specialized in the import of nuclear encoded photosynthetic preproteins from the cytoplasm to the chloroplast. The sequence is that of Translocase of chloroplast 159, chloroplastic from Arabidopsis thaliana (Mouse-ear cress).